Here is a 396-residue protein sequence, read N- to C-terminus: Putative cytochrome P450 YjiB (396 aa).

C349 contacts heme.

The protein belongs to the cytochrome P450 family. Heme serves as cofactor.

The protein is Putative cytochrome P450 YjiB (yjiB) of Bacillus subtilis (strain 168).